The following is a 329-amino-acid chain: 4-hydroxythreonine-4-phosphate dehydrogenase (329 aa).

His136 and Thr137 together coordinate substrate. Residues His166, His211, and His266 each contribute to the a divalent metal cation site. Residues Lys274, Asn283, and Arg292 each coordinate substrate.

This sequence belongs to the PdxA family. In terms of assembly, homodimer. Requires Zn(2+) as cofactor. Mg(2+) serves as cofactor. Co(2+) is required as a cofactor.

It is found in the cytoplasm. The catalysed reaction is 4-(phosphooxy)-L-threonine + NAD(+) = 3-amino-2-oxopropyl phosphate + CO2 + NADH. It participates in cofactor biosynthesis; pyridoxine 5'-phosphate biosynthesis; pyridoxine 5'-phosphate from D-erythrose 4-phosphate: step 4/5. Functionally, catalyzes the NAD(P)-dependent oxidation of 4-(phosphooxy)-L-threonine (HTP) into 2-amino-3-oxo-4-(phosphooxy)butyric acid which spontaneously decarboxylates to form 3-amino-2-oxopropyl phosphate (AHAP). The polypeptide is 4-hydroxythreonine-4-phosphate dehydrogenase (Escherichia coli (strain K12 / MC4100 / BW2952)).